The following is a 93-amino-acid chain: Putative pterin-4-alpha-carbinolamine dehydratase (93 aa).

Belongs to the pterin-4-alpha-carbinolamine dehydratase family.

It catalyses the reaction (4aS,6R)-4a-hydroxy-L-erythro-5,6,7,8-tetrahydrobiopterin = (6R)-L-erythro-6,7-dihydrobiopterin + H2O. This is Putative pterin-4-alpha-carbinolamine dehydratase from Chloroflexus aurantiacus (strain ATCC 29366 / DSM 635 / J-10-fl).